The following is a 261-amino-acid chain: uncharacterized protein (261 aa).

This sequence belongs to the BtpA family.

This is an uncharacterized protein from Methanocaldococcus jannaschii (strain ATCC 43067 / DSM 2661 / JAL-1 / JCM 10045 / NBRC 100440) (Methanococcus jannaschii).